A 68-amino-acid polypeptide reads, in one-letter code: Protein SlyX homolog (68 aa).

It belongs to the SlyX family.

The chain is Protein SlyX homolog from Brucella melitensis biotype 1 (strain ATCC 23456 / CCUG 17765 / NCTC 10094 / 16M).